We begin with the raw amino-acid sequence, 366 residues long: Phospho-N-acetylmuramoyl-pentapeptide-transferase (366 aa).

Helical transmembrane passes span 27-47 (AALF…INSL), 71-91 (TPTM…LLWA), 93-113 (LSNV…AIGF), 134-154 (LGIE…TALA), 174-194 (FLIN…VGAG), 205-225 (GLAI…AYLA), 245-265 (LAVV…FNAP), 268-288 (AIFM…TVAV), 294-314 (IVMA…IIQV), and 343-363 (QVVI…LSTL).

The protein belongs to the glycosyltransferase 4 family. MraY subfamily. Mg(2+) serves as cofactor.

Its subcellular location is the cell inner membrane. It catalyses the reaction UDP-N-acetyl-alpha-D-muramoyl-L-alanyl-gamma-D-glutamyl-meso-2,6-diaminopimeloyl-D-alanyl-D-alanine + di-trans,octa-cis-undecaprenyl phosphate = di-trans,octa-cis-undecaprenyl diphospho-N-acetyl-alpha-D-muramoyl-L-alanyl-D-glutamyl-meso-2,6-diaminopimeloyl-D-alanyl-D-alanine + UMP. The protein operates within cell wall biogenesis; peptidoglycan biosynthesis. Functionally, catalyzes the initial step of the lipid cycle reactions in the biosynthesis of the cell wall peptidoglycan: transfers peptidoglycan precursor phospho-MurNAc-pentapeptide from UDP-MurNAc-pentapeptide onto the lipid carrier undecaprenyl phosphate, yielding undecaprenyl-pyrophosphoryl-MurNAc-pentapeptide, known as lipid I. This chain is Phospho-N-acetylmuramoyl-pentapeptide-transferase, found in Rhizobium etli (strain ATCC 51251 / DSM 11541 / JCM 21823 / NBRC 15573 / CFN 42).